A 324-amino-acid polypeptide reads, in one-letter code: Protein FAM228B (324 aa).

It belongs to the FAM228 family.

This is Protein FAM228B (FAM228B) from Homo sapiens (Human).